Reading from the N-terminus, the 271-residue chain is Probable short-chain type dehydrogenase/reductase VdlC (271 aa).

An NAD(+)-binding site is contributed by 1–25 (MAVITGASSGIGLECVLMLLNQGYK). S129 provides a ligand contact to substrate. Y142 functions as the Proton acceptor in the catalytic mechanism.

It belongs to the short-chain dehydrogenases/reductases (SDR) family.

The protein is Probable short-chain type dehydrogenase/reductase VdlC (vdlC) of Helicobacter pylori (strain J99 / ATCC 700824) (Campylobacter pylori J99).